The sequence spans 193 residues: Holliday junction branch migration complex subunit RuvA (193 aa).

Residues 1–63 are domain I; that stretch reads MYAYLKGKIM…EDAQLLYGFK (63 aa). The tract at residues 64-141 is domain II; that stretch reads DEEEKAMFNA…TITDESELFK (78 aa). A flexible linker region spans residues 141–142; it reads KE. A domain III region spans residues 143 to 193; the sequence is VNDTLLNEALLAFEALGYSKREITKIEKELKKKQFSTVDEYVKQGLQMFVS.

Belongs to the RuvA family. Homotetramer. Forms an RuvA(8)-RuvB(12)-Holliday junction (HJ) complex. HJ DNA is sandwiched between 2 RuvA tetramers; dsDNA enters through RuvA and exits via RuvB. An RuvB hexamer assembles on each DNA strand where it exits the tetramer. Each RuvB hexamer is contacted by two RuvA subunits (via domain III) on 2 adjacent RuvB subunits; this complex drives branch migration. In the full resolvosome a probable DNA-RuvA(4)-RuvB(12)-RuvC(2) complex forms which resolves the HJ.

It is found in the cytoplasm. The RuvA-RuvB-RuvC complex processes Holliday junction (HJ) DNA during genetic recombination and DNA repair, while the RuvA-RuvB complex plays an important role in the rescue of blocked DNA replication forks via replication fork reversal (RFR). RuvA specifically binds to HJ cruciform DNA, conferring on it an open structure. The RuvB hexamer acts as an ATP-dependent pump, pulling dsDNA into and through the RuvAB complex. HJ branch migration allows RuvC to scan DNA until it finds its consensus sequence, where it cleaves and resolves the cruciform DNA. The chain is Holliday junction branch migration complex subunit RuvA from Macrococcus caseolyticus (strain JCSC5402) (Macrococcoides caseolyticum).